Here is a 483-residue protein sequence, read N- to C-terminus: Siroheme synthase (483 aa).

The interval 1 to 203 is precorrin-2 dehydrogenase /sirohydrochlorin ferrochelatase; the sequence is MNYFPIFANL…RQNTLAEREL (203 aa). Residues 22 to 23 and 43 to 44 each bind NAD(+); these read AV and KH. Position 128 is a phosphoserine (serine 128). The segment at 217-483 is uroporphyrinogen-III C-methyltransferase; that stretch reads GSVSLVGAGP…GGLNAGQRAA (267 aa). An S-adenosyl-L-methionine-binding site is contributed by proline 226. Catalysis depends on aspartate 249, which acts as the Proton acceptor. The active-site Proton donor is the lysine 271. S-adenosyl-L-methionine contacts are provided by residues 302–304, valine 307, 332–333, methionine 384, and glycine 413; these read GGD and TA.

In the N-terminal section; belongs to the precorrin-2 dehydrogenase / sirohydrochlorin ferrochelatase family. It in the C-terminal section; belongs to the precorrin methyltransferase family.

The enzyme catalyses uroporphyrinogen III + 2 S-adenosyl-L-methionine = precorrin-2 + 2 S-adenosyl-L-homocysteine + H(+). It carries out the reaction precorrin-2 + NAD(+) = sirohydrochlorin + NADH + 2 H(+). It catalyses the reaction siroheme + 2 H(+) = sirohydrochlorin + Fe(2+). The protein operates within cofactor biosynthesis; adenosylcobalamin biosynthesis; precorrin-2 from uroporphyrinogen III: step 1/1. It functions in the pathway cofactor biosynthesis; adenosylcobalamin biosynthesis; sirohydrochlorin from precorrin-2: step 1/1. Its pathway is porphyrin-containing compound metabolism; siroheme biosynthesis; precorrin-2 from uroporphyrinogen III: step 1/1. It participates in porphyrin-containing compound metabolism; siroheme biosynthesis; siroheme from sirohydrochlorin: step 1/1. The protein operates within porphyrin-containing compound metabolism; siroheme biosynthesis; sirohydrochlorin from precorrin-2: step 1/1. Multifunctional enzyme that catalyzes the SAM-dependent methylations of uroporphyrinogen III at position C-2 and C-7 to form precorrin-2 via precorrin-1. Then it catalyzes the NAD-dependent ring dehydrogenation of precorrin-2 to yield sirohydrochlorin. Finally, it catalyzes the ferrochelation of sirohydrochlorin to yield siroheme. This is Siroheme synthase from Neisseria meningitidis serogroup B (strain ATCC BAA-335 / MC58).